We begin with the raw amino-acid sequence, 185 residues long: Auxin-responsive protein IAA34 (185 aa).

Residues 63 to 67 carry the EAR-like (transcriptional repression) motif; it reads LGLSL. Positions 92 to 180 constitute a PB1 domain; the sequence is WGYVKVTMDG…ERLRITRRND (89 aa).

Belongs to the Aux/IAA family. In terms of assembly, homodimers and heterodimers.

It is found in the nucleus. Its function is as follows. Aux/IAA proteins are short-lived transcriptional factors that function as repressors of early auxin response genes at low auxin concentrations. Repression is thought to result from the interaction with auxin response factors (ARFs), proteins that bind to the auxin-responsive promoter element (AuxRE). Formation of heterodimers with ARF proteins may alter their ability to modulate early auxin response genes expression. This chain is Auxin-responsive protein IAA34 (IAA34), found in Arabidopsis thaliana (Mouse-ear cress).